The sequence spans 264 residues: Glutamate racemase (264 aa).

Residues 12-13 (DS) and 44-45 (YG) contribute to the substrate site. C75 (proton donor/acceptor) is an active-site residue. Residue 76 to 77 (NT) coordinates substrate. C186 acts as the Proton donor/acceptor in catalysis. Position 187-188 (187-188 (TH)) interacts with substrate.

The protein belongs to the aspartate/glutamate racemases family.

It carries out the reaction L-glutamate = D-glutamate. It participates in cell wall biogenesis; peptidoglycan biosynthesis. Provides the (R)-glutamate required for cell wall biosynthesis. The polypeptide is Glutamate racemase (Stutzerimonas stutzeri (strain A1501) (Pseudomonas stutzeri)).